Consider the following 709-residue polypeptide: Polyribonucleotide nucleotidyltransferase (709 aa).

Residues D486 and D492 each contribute to the Mg(2+) site. Positions 553 to 612 (PRIHTIKINPDKIKDVIGKGGSVIRALTEETGTTIEIEDDGTVKIAATDGEKAKHAISRI) constitute a KH domain. Residues 622 to 690 (ARIYTGKVTR…RQGRVRLSIK (69 aa)) form the S1 motif domain.

Belongs to the polyribonucleotide nucleotidyltransferase family. In terms of assembly, component of the RNA degradosome, which is a multiprotein complex involved in RNA processing and mRNA degradation. Mg(2+) serves as cofactor.

It is found in the cytoplasm. The catalysed reaction is RNA(n+1) + phosphate = RNA(n) + a ribonucleoside 5'-diphosphate. Its function is as follows. Involved in mRNA degradation. Catalyzes the phosphorolysis of single-stranded polyribonucleotides processively in the 3'- to 5'-direction. The chain is Polyribonucleotide nucleotidyltransferase from Photorhabdus laumondii subsp. laumondii (strain DSM 15139 / CIP 105565 / TT01) (Photorhabdus luminescens subsp. laumondii).